A 207-amino-acid polypeptide reads, in one-letter code: Large ribosomal subunit protein uL4 (207 aa).

The interval 56–76 (EVRGGGRKPWRQKGTGRARAG) is disordered. Over residues 60–71 (GGRKPWRQKGTG) the composition is skewed to basic residues.

It belongs to the universal ribosomal protein uL4 family. As to quaternary structure, part of the 50S ribosomal subunit.

Functionally, one of the primary rRNA binding proteins, this protein initially binds near the 5'-end of the 23S rRNA. It is important during the early stages of 50S assembly. It makes multiple contacts with different domains of the 23S rRNA in the assembled 50S subunit and ribosome. Forms part of the polypeptide exit tunnel. The chain is Large ribosomal subunit protein uL4 from Desulfitobacterium hafniense (strain DSM 10664 / DCB-2).